Consider the following 349-residue polypeptide: 2-oxoglutarate and iron-dependent oxygenase domain-containing protein 2 (349 aa).

A Fe2OG dioxygenase domain is found at 214 to 308; sequence DSHRAFVVKY…RWNLVVWLRA (95 aa). 3 residues coordinate Fe cation: histidine 234, aspartate 236, and histidine 289. A 2-oxoglutarate-binding site is contributed by arginine 299.

The protein belongs to the OGFOD2 family. Fe(2+) serves as cofactor. L-ascorbate is required as a cofactor.

The chain is 2-oxoglutarate and iron-dependent oxygenase domain-containing protein 2 (Ogfod2) from Mus musculus (Mouse).